Reading from the N-terminus, the 444-residue chain is Zinc protease PqqE (444 aa).

Residues 1 to 28 form the signal peptide; that stretch reads MKHFSVKRLLGLSSVLLVTLGASMHAQS. Zn(2+) is bound at residue His-78. Residue Glu-81 is the Proton acceptor of the active site. Zn(2+) contacts are provided by His-82 and Glu-158.

Belongs to the peptidase M16 family. Zn(2+) serves as cofactor.

It localises to the secreted. Its activity is regulated as follows. Can function alone, but full activity requires the presence of the non-peptidase homolog YmxG. Functionally, virulence factor that cleaves the cytoplasmic domain of the human junctional adhesion molecule A (JAM-A), compromising gastric epithelial barrier function and cell-cell adhesion. Cleavage of JAM-A occurs after Ala-285 or, to a lesser extent, before Ala-285. The chain is Zinc protease PqqE from Helicobacter pylori (strain ATCC 700392 / 26695) (Campylobacter pylori).